Here is a 1174-residue protein sequence, read N- to C-terminus: DNA-directed RNA polymerase subunit beta' (1174 aa).

The Zn(2+) site is built by Cys-60, Cys-62, Cys-75, and Cys-78. Positions 450, 452, and 454 each coordinate Mg(2+). Residues Cys-795, Cys-869, Cys-876, and Cys-879 each coordinate Zn(2+).

This sequence belongs to the RNA polymerase beta' chain family. The RNAP catalytic core consists of 2 alpha, 1 beta, 1 beta' and 1 omega subunit. When a sigma factor is associated with the core the holoenzyme is formed, which can initiate transcription. Requires Mg(2+) as cofactor. Zn(2+) serves as cofactor.

The catalysed reaction is RNA(n) + a ribonucleoside 5'-triphosphate = RNA(n+1) + diphosphate. Its function is as follows. DNA-dependent RNA polymerase catalyzes the transcription of DNA into RNA using the four ribonucleoside triphosphates as substrates. The polypeptide is DNA-directed RNA polymerase subunit beta' (Clostridium kluyveri (strain ATCC 8527 / DSM 555 / NBRC 12016 / NCIMB 10680 / K1)).